A 1326-amino-acid chain; its full sequence is MNLNTSSNTGDTQRLKIASLDVKQILKNETELDITDNLRKKLHWAKKEKLEITTKHNAELASYESQIAKLRSEVEKGEALRQSLEYDLAVARKEAGLGRRAAEERLAEAHRIQEKLCAQNSELQAKTNETEKAFQTSQQKWKEECRRFEHDLEERDNMIQNCNREYDLLMKEKSRLEKTLQEALEKHQREKNEMESHIRETALEEFRLQEEQWEAERRELQFIVQEQDTAVQNMHKKVEKLETEHMDCSDLLRRQTSELEFSTQREERLRKEFEATTLRVRKLEENIEAERAAHLESKFNSEIIQLRIRDLEGALQVEKASQAEAVADLEIIKNEFKEVESAYEREKHNAQESFAKLNLLEKEYFSKNKKLNEDIEEQKKVIIDLSKRLQYNEKSCSELQEELVMAKKHQAFLVETCENNVKELESILDSFTVSGQWTSGIHKDKDKPPSFSVVLERLRRTLTDYQNKLEDASNEEKACNELDSTKQKIDSHTKNIKELQDKLADVNKELSHLHTKCADREALISTLKVELQNVLHCWEKEKAQAAQSESELQKLSQAFHKDAEEKLTFLHTLYQHLVAGCVLIKQPEGMLDKFSWSELCAVLQENVDALIADLNRANEKIRHLEYICKNKSDTMRELQQTQEDTFTKVAEQIKAQESCWHRQKKELELQYSELFLEVQKRAQKFQEIAEKNMEKLNHIEKSHEQLVLENSHFKKLLSQTQREQMSLLAACALMAGALYPLYSRSCALSTQRDFLQEQVNTFELFKLEIRTLAQALSTVEEKKQEEAKMKKKTFKGLIRIFRKGVIAVLAANRLKILGQSCASLFTWMESFKEGIGMLVCTGEPQDKHKFPKHQKEQLRCLQALSWLTSSDLLAAIISSMAELQDVIGKADPNSRICGHLLIGAAKNSFAKLMDKISLVMECIPLHSSRSITYVEKDSLVQRLAHGLHKVNTLALKYGLRGHVPITKSTASLQKQILGFTQRLHAAEVERRSLRLEVTEFKRSVNEMKKELDKAQGLQMQLNEFKQSKLITHEKFESACEELNNALLREEQAQMLLNEQAQQLQELNYKLELHSSEEADKNQTLGEAVKSLSEAKMELRRKDQSLRQLNRHLTQLEQDKRRLEENIHDAESALRMAAKDKECVANHMRAVENTLHKVRDQISLSWSAASRNDFTLQLPKLHLETFAMEGLKGGPEVVACQAMIKSFMDVYQLASTRIMTLEKEMTSHRSHIAALKSELHTACLRENASLQSIGSRDHSNLSIPSRAPLPADTTGIGDFLPLKAELDTTYTFLKETFINTVPHALTSSHSSPVTMSANANRPTQIGL.

8 coiled-coil regions span residues 53–294, 323–391, 450–561, 597–630, 660–707, 765–792, 979–1143, and 1217–1241; these read TTKH…RAAH, AEAV…RLQY, SFSV…AFHK, SELC…ICKN, WHRQ…EQLV, FKLE…MKKK, FTQR…KECV, and IMTL…LHTA. Residues 1306-1326 are disordered; the sequence is SSHSSPVTMSANANRPTQIGL.

The protein is Coiled-coil domain-containing protein 171 (CCDC171) of Homo sapiens (Human).